The sequence spans 248 residues: 1-(5-phosphoribosyl)-5-[(5-phosphoribosylamino)methylideneamino] imidazole-4-carboxamide isomerase (248 aa).

Aspartate 8 acts as the Proton acceptor in catalysis. Catalysis depends on aspartate 131, which acts as the Proton donor.

It belongs to the HisA/HisF family.

It is found in the cytoplasm. The catalysed reaction is 1-(5-phospho-beta-D-ribosyl)-5-[(5-phospho-beta-D-ribosylamino)methylideneamino]imidazole-4-carboxamide = 5-[(5-phospho-1-deoxy-D-ribulos-1-ylimino)methylamino]-1-(5-phospho-beta-D-ribosyl)imidazole-4-carboxamide. It participates in amino-acid biosynthesis; L-histidine biosynthesis; L-histidine from 5-phospho-alpha-D-ribose 1-diphosphate: step 4/9. The polypeptide is 1-(5-phosphoribosyl)-5-[(5-phosphoribosylamino)methylideneamino] imidazole-4-carboxamide isomerase (Cupriavidus pinatubonensis (strain JMP 134 / LMG 1197) (Cupriavidus necator (strain JMP 134))).